The primary structure comprises 576 residues: Arginine--tRNA ligase (576 aa).

Residues 126 to 136 (ANPTGPMHIGH) carry the 'HIGH' region motif.

The protein belongs to the class-I aminoacyl-tRNA synthetase family. As to quaternary structure, monomer.

The protein localises to the cytoplasm. The enzyme catalyses tRNA(Arg) + L-arginine + ATP = L-arginyl-tRNA(Arg) + AMP + diphosphate. The polypeptide is Arginine--tRNA ligase (Rickettsia canadensis (strain McKiel)).